A 588-amino-acid chain; its full sequence is Ribonuclease Y (588 aa).

The chain crosses the membrane as a helical span at residues 7–27; it reads VLLVAVLLLTVVVVGAVLVGV. Positions 278 to 359 constitute a KH domain; sequence VVSVLHLPGD…HRIEEVHDLA (82 aa). In terms of domain architecture, HD spans 404–497; that stretch reads VLKHLVESAH…TQASDACSGG (94 aa).

The protein belongs to the RNase Y family.

It is found in the cell membrane. Its function is as follows. Endoribonuclease that initiates mRNA decay. This Salinispora tropica (strain ATCC BAA-916 / DSM 44818 / JCM 13857 / NBRC 105044 / CNB-440) protein is Ribonuclease Y.